The following is a 687-amino-acid chain: Putative ammonium transporter 3 (687 aa).

Transmembrane regions (helical) follow at residues A39–L59, V77–G97, A134–V154, S162–W182, F196–F216, L240–I260, A272–V292, V299–V319, W323–L343, V352–F372, and C404–S424. 3 disordered regions span residues R521–Q544, A549–E568, and P592–V687. Polar residues predominate over residues A549–G564. 2 stretches are compositionally biased toward low complexity: residues S614–I632 and S648–T665.

The protein belongs to the ammonia transporter channel (TC 1.A.11.2) family.

It localises to the membrane. Functionally, involved in the uptake of ammonia. The chain is Putative ammonium transporter 3 (amt-3) from Caenorhabditis elegans.